Reading from the N-terminus, the 167-residue chain is Lipoprotein signal peptidase (167 aa).

The next 4 helical transmembrane spans lie at 8 to 28 (TFLTSFLLVSLDWVSKLVVLL), 46 to 66 (WGHFSFLIVPSFNEGAAFGLF), 70 to 90 (KIPLLIFRVFVILCLFLFLGI), and 101 to 121 (IALTLILAGALGNVGDILFHG). Residues aspartate 125 and aspartate 143 contribute to the active site. The helical transmembrane segment at 139-159 (FNLADAFISLGTLLLVGHLYF) threads the bilayer.

This sequence belongs to the peptidase A8 family.

It localises to the cell inner membrane. The catalysed reaction is Release of signal peptides from bacterial membrane prolipoproteins. Hydrolyzes -Xaa-Yaa-Zaa-|-(S,diacylglyceryl)Cys-, in which Xaa is hydrophobic (preferably Leu), and Yaa (Ala or Ser) and Zaa (Gly or Ala) have small, neutral side chains.. The protein operates within protein modification; lipoprotein biosynthesis (signal peptide cleavage). In terms of biological role, this protein specifically catalyzes the removal of signal peptides from prolipoproteins. In Chlamydia muridarum (strain MoPn / Nigg), this protein is Lipoprotein signal peptidase.